The primary structure comprises 147 residues: Myosin-2 essential light chain (147 aa).

EF-hand domains lie at 7-42, 80-115, and 115-147; these read DQLAEFQEAFNLFDNRGDGKIQLSQVGECLRALGQN, DTADDFIEGLRHFDKDASGYISSAELRHLLTTLGEK, and KLTDEEVEQLLANMEDQQGNINYEEFVRMVMSG. Ser30 carries the phosphoserine modification. Residues Asp93, Asp95, Ser97, Tyr99, and Glu104 each contribute to the Ca(2+) site.

Myosin is a hexamer of 2 heavy chains and 4 light chains.

In Drosophila melanogaster (Fruit fly), this protein is Myosin-2 essential light chain (Mlc-c).